Here is a 239-residue protein sequence, read N- to C-terminus: RING finger protein 151 (239 aa).

Residues 20 to 58 (CSVCHGVLKRPTRLPCSHIFCKKCIFRWLARQNTCPCCR) form an RING-type zinc finger. The segment at 101 to 156 (EHQDSCPFELMACPNEGCTVQVLRGVLDEHRQHCQQNGQQRCPLGCGSTLAALEGE) adopts a TRAF-type zinc-finger fold.

In terms of assembly, interacts with DTNBP1. Expressed in testis. Expressed in round spermatids of the stages VII-VIII semniniferous tubules. Expressed in elongating spermatids of stages VIII-IX seminiferous tubules (at protein level).

The protein resides in the cytoplasm. It localises to the nucleus. Functionally, may be involved in acrosome formation of spermatids. The sequence is that of RING finger protein 151 (Rnf151) from Mus musculus (Mouse).